The following is a 759-amino-acid chain: Phosphoribosylformylglycinamidine synthase subunit PurL (759 aa).

The active site involves His46. 2 residues coordinate ATP: Tyr49 and Lys88. Glu90 is a binding site for Mg(2+). Substrate is bound by residues 91–94 (SHNH) and Arg113. Residue His92 is the Proton acceptor of the active site. Asp114 contacts Mg(2+). Gln237 provides a ligand contact to substrate. Residue Asp265 participates in Mg(2+) binding. 309–311 (ESQ) contacts substrate. ATP is bound by residues Asp498 and Gly535. Asn536 lines the Mg(2+) pocket. A substrate-binding site is contributed by Ser538.

This sequence belongs to the FGAMS family. As to quaternary structure, monomer. Part of the FGAM synthase complex composed of 1 PurL, 1 PurQ and 2 PurS subunits.

Its subcellular location is the cytoplasm. It carries out the reaction N(2)-formyl-N(1)-(5-phospho-beta-D-ribosyl)glycinamide + L-glutamine + ATP + H2O = 2-formamido-N(1)-(5-O-phospho-beta-D-ribosyl)acetamidine + L-glutamate + ADP + phosphate + H(+). It functions in the pathway purine metabolism; IMP biosynthesis via de novo pathway; 5-amino-1-(5-phospho-D-ribosyl)imidazole from N(2)-formyl-N(1)-(5-phospho-D-ribosyl)glycinamide: step 1/2. Functionally, part of the phosphoribosylformylglycinamidine synthase complex involved in the purines biosynthetic pathway. Catalyzes the ATP-dependent conversion of formylglycinamide ribonucleotide (FGAR) and glutamine to yield formylglycinamidine ribonucleotide (FGAM) and glutamate. The FGAM synthase complex is composed of three subunits. PurQ produces an ammonia molecule by converting glutamine to glutamate. PurL transfers the ammonia molecule to FGAR to form FGAM in an ATP-dependent manner. PurS interacts with PurQ and PurL and is thought to assist in the transfer of the ammonia molecule from PurQ to PurL. The sequence is that of Phosphoribosylformylglycinamidine synthase subunit PurL from Anaeromyxobacter dehalogenans (strain 2CP-1 / ATCC BAA-258).